A 771-amino-acid chain; its full sequence is Metal transporter CNNM4 (771 aa).

The Extracellular segment spans residues 1–175 (MAPGGGGGRR…LLFMVEEHGR (175 aa)). The N-linked (GlcNAc...) asparagine glycan is linked to Asn119. The CNNM transmembrane domain maps to 175–355 (RFLPLWLHIL…EPYNDLVKEE (181 aa)). Residues 176–196 (FLPLWLHILLVMVLLVLSGIF) traverse the membrane as a helical segment. At 197–237 (SGLNLGLMALDPMELRIVQNCGTEKERKYARKIEPIRRKGN) the chain is on the cytoplasmic side. The segment at residues 238–258 (YLLCSLLLGNVLVNTSLTILL) is an intramembrane region (helical). Topologically, residues 259 to 261 (DNL) are cytoplasmic. Residues 262–282 (IGSGIMAVASSTIGIVIFGEI) form a helical membrane-spanning segment. Residues 283-290 (LPQALCSR) are Extracellular-facing. A helical transmembrane segment spans residues 291–313 (HGLAVGANTIVLTKVFMLLTFPL). Residues 314–771 (SFPISKLLDF…LHRASEEETI (458 aa)) are Cytoplasmic-facing. CBS domains follow at residues 374–435 (MTQL…CTPL) and 442–508 (YNHP…ILDE). Residues Ser657, Ser661, and Ser766 each carry the phosphoserine modification.

The protein belongs to the ACDP family. As to quaternary structure, interacts with COX11. As to expression, cornea, retina, teeth (at protein level). In the retina it is predominantly localized to the outer plexiform layer, inner plexiform layer and ganglion cell layer. In the tooth strongest expression is observed in the cell body of the ameloblasts. Expressed at high levels in the gastrointestinal tract and testis.

The protein localises to the cell membrane. In terms of biological role, probable metal transporter. The interaction with the metal ion chaperone COX11 suggests that it may play a role in sensory neuron functions. May play a role in biomineralization and retinal function. This is Metal transporter CNNM4 (Cnnm4) from Mus musculus (Mouse).